A 267-amino-acid chain; its full sequence is Hydroxyethylthiazole kinase (267 aa).

Substrate is bound at residue methionine 46. ATP contacts are provided by arginine 122 and serine 168. Glycine 195 contributes to the substrate binding site.

Belongs to the Thz kinase family. The cofactor is Mg(2+).

It carries out the reaction 5-(2-hydroxyethyl)-4-methylthiazole + ATP = 4-methyl-5-(2-phosphooxyethyl)-thiazole + ADP + H(+). It participates in cofactor biosynthesis; thiamine diphosphate biosynthesis; 4-methyl-5-(2-phosphoethyl)-thiazole from 5-(2-hydroxyethyl)-4-methylthiazole: step 1/1. Its function is as follows. Catalyzes the phosphorylation of the hydroxyl group of 4-methyl-5-beta-hydroxyethylthiazole (THZ). In Nitratidesulfovibrio vulgaris (strain ATCC 29579 / DSM 644 / CCUG 34227 / NCIMB 8303 / VKM B-1760 / Hildenborough) (Desulfovibrio vulgaris), this protein is Hydroxyethylthiazole kinase.